Here is a 145-residue protein sequence, read N- to C-terminus: uncharacterized protein (145 aa).

It belongs to the asfivirus K145R family.

Its subcellular location is the virion. This is an uncharacterized protein from Ornithodoros (relapsing fever ticks).